A 491-amino-acid polypeptide reads, in one-letter code: Probable succinate-semialdehyde dehydrogenase [NADP(+)] (491 aa).

NADP(+) is bound by residues 163–164, 187–190, and 241–242; these read WN, KPAE, and GS. Catalysis depends on glutamate 263, which acts as the Proton acceptor. Leucine 264 lines the NADP(+) pocket. Catalysis depends on cysteine 297, which acts as the Nucleophile. Glutamate 394 is a binding site for NADP(+).

This sequence belongs to the aldehyde dehydrogenase family.

The catalysed reaction is succinate semialdehyde + NADP(+) + H2O = succinate + NADPH + 2 H(+). It participates in amino-acid degradation; 4-aminobutanoate degradation. In terms of biological role, catalyzes the NADP(+) dependent oxidation of succinate semialdehyde to succinate. The sequence is that of Probable succinate-semialdehyde dehydrogenase [NADP(+)] (gabD) from Sinorhizobium fredii (strain NBRC 101917 / NGR234).